The chain runs to 56 residues: MEKLWRRGIEEYGVTYANLKLNVIINCYEGERSHRDTGNHNIHCSSAKPYSLLCFT.

This is an uncharacterized protein from Thermoproteus tenax virus 1 (strain KRA1) (TTV1).